Reading from the N-terminus, the 828-residue chain is MSRNLPNPSLVGILFVVSTHSGPQLLYKYPHNLTDRVFSLVPRKHAGTEDGMQHLVRDDKDDDDDDELYEYNEDEDPESGDLLFFDKDGTSRDRSGINVISDTNHSQYYYGTKLELKRTLDEGRALRRATPHKYNHNRLSTEHPKRNEHSQGSKSRRSIRNTDTTQDDNYQKQKGQQEGREKKDKDKEKEKEKDAEEKGDVSEPHSAVDTFSIADDIFGMAPGYLCEILSPPRQMCNTRYEVTIQDKIFLGLPIHQHADGTWTNARSSKRSQSGRSNSLHFENLTSSTEAQLASTTAQSLTMFHLVFIMNPPATECSYRIDEMFQHVASRTSLGLRLAQQKHNYVGNQMKAIQRAREQECKEVDLDKTLSLCKLIKECYLAISTSRIANLEIDGKQVVCQIPTKYEFDSLPEPSVPYIPRSFLSSSIHSFGMWDRSNIEQQKLDDDFLQESIMCFALLLLAEPHNILQDMNIVTNSPFGKFIMLLHPSESLLKFCSKNSQHFEPSEVKSYALHLIYWKKARAIQPLSSRSVYVASPMASLTTKLFEDIYRFKARFPMSPSLPQFLKLLSPQLKKPQQFASIIPSRDHRASYFEALAWLIRFGYVNQQLTFVWLKIPKNLRVKVEEDMENEDALLKRNKDRVFGEKSQTTDNTSKTMAVQESPHNNDITTTRDTKISNNRNNGSDFDTDADANVNVNSDANTSTNAAVANTAAGLVDARKDSLINATTETTESQTERLKKQLTLSVVDDEDTIILEPGRASTLERRWINEIISVCKLSHDLIAIFYKLLKFMNGKTPLEFLIIKNEISRLDLKKLLYAIGNYIVSVRHW.

An N-terminal signal peptide occupies residues 1–21 (MSRNLPNPSLVGILFVVSTHS). Residues 49–59 (EDGMQHLVRDD) are compositionally biased toward basic and acidic residues. 3 disordered regions span residues 49-87 (EDGM…FFDK), 127-207 (RRAT…PHSA), and 644-688 (EKSQ…FDTD). Residues 60-79 (KDDDDDDELYEYNEDEDPES) show a composition bias toward acidic residues. A compositionally biased stretch (basic residues) spans 127-136 (RRATPHKYNH). 2 stretches are compositionally biased toward basic and acidic residues: residues 139–151 (LSTE…EHSQ) and 169–203 (NYQK…DVSE). Polar residues-rich tracts occupy residues 645–668 (KSQT…NDIT) and 675–684 (ISNNRNNGSD).

It belongs to the NPR3 family.

Functionally, mediates inactivation of the TORC1 complex in response to amino acid starvation. Required for meiotic nuclear division. The chain is Nitrogen permease regulator 3 (NPR3) from Lodderomyces elongisporus (strain ATCC 11503 / CBS 2605 / JCM 1781 / NBRC 1676 / NRRL YB-4239) (Yeast).